Reading from the N-terminus, the 361-residue chain is Phosphoserine aminotransferase (361 aa).

R42 serves as a coordination point for L-glutamate. Pyridoxal 5'-phosphate is bound by residues 76–77 (AR), W102, T153, D173, and Q196. K197 carries the post-translational modification N6-(pyridoxal phosphate)lysine. Pyridoxal 5'-phosphate is bound at residue 238-239 (NT).

It belongs to the class-V pyridoxal-phosphate-dependent aminotransferase family. SerC subfamily. Homodimer. The cofactor is pyridoxal 5'-phosphate.

It localises to the cytoplasm. The catalysed reaction is O-phospho-L-serine + 2-oxoglutarate = 3-phosphooxypyruvate + L-glutamate. It carries out the reaction 4-(phosphooxy)-L-threonine + 2-oxoglutarate = (R)-3-hydroxy-2-oxo-4-phosphooxybutanoate + L-glutamate. Its pathway is amino-acid biosynthesis; L-serine biosynthesis; L-serine from 3-phospho-D-glycerate: step 2/3. The protein operates within cofactor biosynthesis; pyridoxine 5'-phosphate biosynthesis; pyridoxine 5'-phosphate from D-erythrose 4-phosphate: step 3/5. In terms of biological role, catalyzes the reversible conversion of 3-phosphohydroxypyruvate to phosphoserine and of 3-hydroxy-2-oxo-4-phosphonooxybutanoate to phosphohydroxythreonine. This is Phosphoserine aminotransferase from Mannheimia succiniciproducens (strain KCTC 0769BP / MBEL55E).